A 381-amino-acid polypeptide reads, in one-letter code: p55-v-Fos-transforming protein (381 aa).

The bZIP domain maps to 137 to 200 (EEKRRIRRER…EKLEFILAAH (64 aa)). Residues 139 to 159 (KRRIRRERNKMAAAKCRNRRR) form a basic motif region. The tract at residues 165–193 (LQAETDQLEDKKSALQTEIANLLKEKEKL) is leucine-zipper.

It belongs to the bZIP family. Fos subfamily.

It localises to the host nucleus. In Mus musculus (Mouse), this protein is p55-v-Fos-transforming protein (V-FOS).